The chain runs to 476 residues: MSGSSARSSHLSQPVVKSVLVYRNGDPFYAGRRVVIHEKKVSSFEVFLKEVTGGVQAPFGAVRNIYTPRTGHRIRKLDQIQSGGNYVAGGQEAFKKLNYLDIGEIKKRPMEVVNTEVKPVIHSRINVSARFRKPLQEPCTIFLIANGDLINPASRLLIPRKTLNQWDHVLQMVTEKITLRSGAVHRLYTLEGKLVESGAELENGQFYVAVGRDKFKKLPYSELLFDKSTMRRPFGQKASSLPPIVGSRKSKGSGNDRHSKSTVGSSDNSSPQPLKRKGKKEDVNSEKLTKLKQNVKLKNSQETIPNSDEGIFKAGAERSETRGAAEVQEDEDTQVEVPVDQRPAEIVDEEEDGEKANKDAEQKEDFSGMNGDLEEEGGREATDAPEQVEEILDHSEQQARPARVNGGTDEENGEELQQVNNELQLVLDKERKSQGAGSGQDEADVDPQRPPRPEVKITSPEENENNQQNKDYAAVA.

Doublecortin domains are found at residues 17-100 (KSVL…LNYL) and 139-221 (CTIF…LPYS). The tract at residues 234–476 (FGQKASSLPP…QQNKDYAAVA (243 aa)) is disordered. The span at 261 to 272 (STVGSSDNSSPQ) shows a compositional bias: polar residues. Residue Ser270 is modified to Phosphoserine. A compositionally biased stretch (basic and acidic residues) spans 279–289 (KKEDVNSEKLT). A compositionally biased stretch (polar residues) spans 296–306 (KLKNSQETIPN). The span at 354–366 (EKANKDAEQKEDF) shows a compositional bias: basic and acidic residues. Over residues 415–426 (ELQQVNNELQLV) the composition is skewed to low complexity. Residues 446–455 (DPQRPPRPEV) are compositionally biased toward basic and acidic residues.

Interacts with DVL1, DVL2 and DVL3. As to expression, ubiquitously expressed. In brain, highly expressed in the entorhinal cortex, inferior temporal cortex, medial temporal cortex, hypothalamus, amygdala and hippocampus. Expressed in liver by cholangiocytes, the epithelial cells of the bile ducts (at protein level).

It is found in the cell projection. It localises to the cilium. Its subcellular location is the cytoplasm. The protein localises to the cytoskeleton. The protein resides in the cilium axoneme. It is found in the kinocilium. Its function is as follows. Protein that plays a role in the inhibition of canonical Wnt signaling pathway. May be involved in neuronal migration during development of the cerebral neocortex. Involved in the control of ciliogenesis and ciliary length. The sequence is that of Doublecortin domain-containing protein 2 (DCDC2) from Homo sapiens (Human).